We begin with the raw amino-acid sequence, 353 residues long: Spermidine/putrescine import ATP-binding protein PotA (353 aa).

The ABC transporter domain maps to 7–237; the sequence is IRFERVTKEY…PINRFVADFI (231 aa). 39 to 46 serves as a coordination point for ATP; the sequence is GPSGCGKT.

It belongs to the ABC transporter superfamily. Spermidine/putrescine importer (TC 3.A.1.11.1) family. As to quaternary structure, the complex is composed of two ATP-binding proteins (PotA), two transmembrane proteins (PotB and PotC) and a solute-binding protein (PotD).

Its subcellular location is the cell membrane. The catalysed reaction is ATP + H2O + polyamine-[polyamine-binding protein]Side 1 = ADP + phosphate + polyamineSide 2 + [polyamine-binding protein]Side 1.. Part of the ABC transporter complex PotABCD involved in spermidine/putrescine import. Responsible for energy coupling to the transport system. This chain is Spermidine/putrescine import ATP-binding protein PotA, found in Geobacillus kaustophilus (strain HTA426).